We begin with the raw amino-acid sequence, 229 residues long: 2,3-bisphosphoglycerate-dependent phosphoglycerate mutase (229 aa).

Substrate-binding positions include 7 to 14 (RHGQSEWN), 20 to 21 (TG), Arg59, 86 to 89 (ERHY), Lys97, 113 to 114 (RR), and 182 to 183 (GN). Residue His8 is the Tele-phosphohistidine intermediate of the active site. Glu86 (proton donor/acceptor) is an active-site residue.

Belongs to the phosphoglycerate mutase family. BPG-dependent PGAM subfamily.

The enzyme catalyses (2R)-2-phosphoglycerate = (2R)-3-phosphoglycerate. It participates in carbohydrate degradation; glycolysis; pyruvate from D-glyceraldehyde 3-phosphate: step 3/5. Catalyzes the interconversion of 2-phosphoglycerate and 3-phosphoglycerate. In Listeria monocytogenes serovar 1/2a (strain ATCC BAA-679 / EGD-e), this protein is 2,3-bisphosphoglycerate-dependent phosphoglycerate mutase.